A 962-amino-acid polypeptide reads, in one-letter code: Splicing regulator ARVCF (962 aa).

The stretch at 11-46 (SILASVKEQEARFERLTRALEQERRHVALQLERAQQ) forms a coiled coil. A disordered region spans residues 95 to 123 (VTVEEDPGTPTSHVSIVTSEDGTTRRTET). Residues T103 and T105 each carry the phosphothreonine modification. Residues 103–115 (TPTSHVSIVTSED) show a composition bias toward polar residues. Residue R171 is modified to Omega-N-methylarginine. 3 disordered regions span residues 233 to 255 (GRREAFPMGSESGPPSGRSLPEH), 268 to 291 (RSLAADDEGGPDLEPDYSTATRRR), and 322 to 357 (AATAPLAQPERGSLGSLDRVVRRSPSVDSTRKEPRW). S269 carries the post-translational modification Phosphoserine. The span at 272-282 (ADDEGGPDLEP) shows a compositional bias: acidic residues. S334, S337, S345, and S347 each carry phosphoserine. ARM repeat units lie at residues 350 to 389 (STRKEPRWRDPELPEVLAMLRHPVDPVKANAAAYLQHLCF), 392 to 431 (EGIKRRVRQLRGLPLLVALLDHPRAEVRRRACGALRNLSY), 435 to 469 (TDNKAAIRDCGGVPALVRLLRAARDNEVRELVTGT), 470 to 510 (LWNL…NEDS), 528 to 567 (LRNVSSDGAEARRRLRECEGLVDALLHALQSAVGRKDTDN), and 577 to 623 (MRNL…GKKA). A disordered region spans residues 593–618 (RYQEAEPGIPGSTTSQRRRKDDASCF). S607 is modified (phosphoserine). A Nuclear localization signal motif is present at residues 608-624 (QRRRKDDASCFGGKKAK). T643 carries the phosphothreonine modification. ARM repeat units lie at residues 647-687 (PKRT…AAGA), 700-739 (TYIRATVRKERGLPVLVELLQSETDKVVRAVAIALRNLSL), 740-782 (DQRN…AVLN), and 783-827 (TIHE…SHVL). The segment at 777 to 962 (VVAVLNTIHE…TKPQPVDSWV (186 aa)) is required for interaction with RNA-binding proteins DDX5, HNRNPH2 and SRSF1 and with mRNAs. The segment at 844–962 (GWTKSRFQSA…TKPQPVDSWV (119 aa)) is disordered. 2 positions are modified to phosphoserine: S864 and S871. At T872 the chain carries Phosphothreonine. Composition is skewed to basic and acidic residues over residues 878–887 (KSLDGEKSNT) and 920–932 (TSEKELLRPDPGR).

The protein belongs to the beta-catenin family. In terms of assembly, component of a ribonucleoprotein complex containing mRNAs and RNA-binding proteins including DDX5, HNRNPH2 and SRSF1 as well as ARVCF. Interacts (via the extreme C-terminus) with FRMPD2 (via the PDZ 2 domain). Interacts with CCDC85B.

It is found in the cell junction. The protein localises to the adherens junction. The protein resides in the nucleus. It localises to the cytoplasm. Functionally, contributes to the regulation of alternative splicing of pre-mRNAs. This chain is Splicing regulator ARVCF (Arvcf), found in Mus musculus (Mouse).